We begin with the raw amino-acid sequence, 851 residues long: Meiotically up-regulated gene 87 protein (851 aa).

This sequence belongs to the nucleoporin interacting component (NIC) family.

The protein resides in the nucleus envelope. Its function is as follows. Has a role in meiosis. This is Meiotically up-regulated gene 87 protein (mug87) from Schizosaccharomyces pombe (strain 972 / ATCC 24843) (Fission yeast).